A 250-amino-acid polypeptide reads, in one-letter code: L-ascorbate peroxidase 1, cytosolic (250 aa).

Histidine 42 acts as the Proton acceptor in catalysis. Residues 113 to 137 (VPFHPGREDKPAPPPEGRLPDATKG) form a disordered region. Residue histidine 163 coordinates heme b. K(+)-binding residues include threonine 164, threonine 180, asparagine 182, and aspartate 187.

Belongs to the peroxidase family. Ascorbate peroxidase subfamily. Heme b is required as a cofactor.

Its subcellular location is the cytoplasm. The enzyme catalyses L-ascorbate + H2O2 = L-dehydroascorbate + 2 H2O. Its function is as follows. Plays a key role in hydrogen peroxide removal. This is L-ascorbate peroxidase 1, cytosolic (APX1) from Oryza sativa subsp. indica (Rice).